Reading from the N-terminus, the 168-residue chain is 3-isopropylmalate dehydratase small subunit 2 (168 aa).

This sequence belongs to the LeuD family. LeuD type 2 subfamily. In terms of assembly, heterodimer of LeuC and LeuD.

The catalysed reaction is (2R,3S)-3-isopropylmalate = (2S)-2-isopropylmalate. It participates in amino-acid biosynthesis; L-leucine biosynthesis; L-leucine from 3-methyl-2-oxobutanoate: step 2/4. Functionally, catalyzes the isomerization between 2-isopropylmalate and 3-isopropylmalate, via the formation of 2-isopropylmaleate. In Methanopyrus kandleri (strain AV19 / DSM 6324 / JCM 9639 / NBRC 100938), this protein is 3-isopropylmalate dehydratase small subunit 2 (leuD2).